We begin with the raw amino-acid sequence, 60 residues long: UPF0434 protein Ent638_1436 (60 aa).

This sequence belongs to the UPF0434 family.

This is UPF0434 protein Ent638_1436 from Enterobacter sp. (strain 638).